A 144-amino-acid polypeptide reads, in one-letter code: Small ribosomal subunit protein eS19B (144 aa).

The protein belongs to the eukaryotic ribosomal protein eS19 family. Component of the small ribosomal subunit (SSU). Mature yeast ribosomes consist of a small (40S) and a large (60S) subunit. The 40S small subunit contains 1 molecule of ribosomal RNA (18S rRNA) and 33 different proteins (encoded by 57 genes). The large 60S subunit contains 3 rRNA molecules (25S, 5.8S and 5S rRNA) and 46 different proteins (encoded by 81 genes).

Its subcellular location is the cytoplasm. Functionally, component of the ribosome, a large ribonucleoprotein complex responsible for the synthesis of proteins in the cell. The small ribosomal subunit (SSU) binds messenger RNAs (mRNAs) and translates the encoded message by selecting cognate aminoacyl-transfer RNA (tRNA) molecules. The large subunit (LSU) contains the ribosomal catalytic site termed the peptidyl transferase center (PTC), which catalyzes the formation of peptide bonds, thereby polymerizing the amino acids delivered by tRNAs into a polypeptide chain. The nascent polypeptides leave the ribosome through a tunnel in the LSU and interact with protein factors that function in enzymatic processing, targeting, and the membrane insertion of nascent chains at the exit of the ribosomal tunnel. eS19 is required for proper maturation of the small (40S) ribosomal subunit. Binds to 40S pre-ribosomal particles, probably required after association of NOC4 but before association of ENP1, TSR1 and RIO2 with 20/21S pre-rRNA. In terms of biological role, required for proper maturation of the small (40S) ribosomal subunit. Binds to 40s pre-ribosomal particles, probably required after association of NOC4 but before association of ENP1, TSR1 and RIO2 with 20/21S pre-rRNA. This chain is Small ribosomal subunit protein eS19B, found in Saccharomyces cerevisiae (strain ATCC 204508 / S288c) (Baker's yeast).